Consider the following 162-residue polypeptide: Beta-lactoglobulin (162 aa).

Disulfide bonds link Cys66-Cys160, Cys106-Cys119, and Cys106-Cys121.

It belongs to the calycin superfamily. Lipocalin family. As to quaternary structure, under physiological conditions beta-lactoglobulin exists as an equilibrium mixture of monomeric and dimeric forms. Post-translationally, alternate disulfide bonds occur in equal amounts.

It is found in the secreted. In terms of biological role, lactoglobulin is the primary component of whey, it binds retinol and is probably involved in the transport of that molecule. In Ovis aries musimon (Mouflon), this protein is Beta-lactoglobulin (LGB).